Reading from the N-terminus, the 609-residue chain is UvrABC system protein C (609 aa).

A GIY-YIG domain is found at 16 to 94; it reads SSAGVYRMYD…IKQYMPKYNV (79 aa). Residues 203-238 form the UVR domain; sequence KQVISELVAKMEEAAEQQAYEQAARFRDQIMALRRV.

It belongs to the UvrC family. In terms of assembly, interacts with UvrB in an incision complex.

It is found in the cytoplasm. In terms of biological role, the UvrABC repair system catalyzes the recognition and processing of DNA lesions. UvrC both incises the 5' and 3' sides of the lesion. The N-terminal half is responsible for the 3' incision and the C-terminal half is responsible for the 5' incision. The chain is UvrABC system protein C from Shewanella oneidensis (strain ATCC 700550 / JCM 31522 / CIP 106686 / LMG 19005 / NCIMB 14063 / MR-1).